The sequence spans 653 residues: Probable potassium transport system protein Kup (653 aa).

The next 12 helical transmembrane spans lie at 37–57 (ALLA…SPLY), 79–99 (VLSL…LLLV), 134–154 (ITLG…TPAI), 168–188 (AVFD…LFLV), 196–216 (IGAV…GLGV), 243–263 (LHGF…EALY), 278–298 (WFSM…ALLL), 320–340 (LVAL…AGVF), 368–388 (IYLP…VLGF), 397–417 (AYGI…YVVA), 426–446 (WVAI…FGAN), and 450–470 (VADG…LMTT).

This sequence belongs to the HAK/KUP transporter (TC 2.A.72) family.

The protein resides in the cell inner membrane. It catalyses the reaction K(+)(in) + H(+)(in) = K(+)(out) + H(+)(out). In terms of biological role, transport of potassium into the cell. Likely operates as a K(+):H(+) symporter. The sequence is that of Probable potassium transport system protein Kup from Myxococcus xanthus (strain DK1622).